The primary structure comprises 423 residues: MATATRLLGWRVASWRMRPPPAGFVSQRAHSLLPVDDAINGLSEEQRQLRQTVAKFLQEHLAPKAQEIDRSNEFKNLREFWKQLGNLGVLGITAPVQYGGSGLGYLEHVLVMEEISRASGAVGLSYGAHSNLCINQLVRNGNEAQKEKYLPKLISGEYIGALAMSEPNAGSDVVSMKLKAEKKGNHYILNGNKFWITNGPDADVLIVYAKTDLAAVPASRGITAFIVEKGMPGFSTSKKLDKLGMRGSNTCELIFEDCKVPAANILGHENKGVYVLMSGLDLERLVLAGGPLGLMQAVLDHTIPYLHVREAFGQKIGHFQLMQGKMADMYTRLMACRQYVYNVAKACDEGHCTAKDCAGVILYSAECATQVALDGIQCFGGNGYINDFPMGRFLRDAKLYEIGAGTSEVRRLVIGRAFNADFH.

The transit peptide at 1–29 (MATATRLLGWRVASWRMRPPPAGFVSQRA) directs the protein to the mitochondrion. 3 positions are modified to N6-acetyllysine; alternate: K55, K64, and K75. N6-succinyllysine; alternate occurs at positions 55, 64, and 75. Residues 162–171 (LAMSEPNAGS) and 195–197 (WIT) contribute to the FAD site. Substrate is bound at residue S171. 219-220 (SR) contacts substrate. K238 bears the N6-acetyllysine mark. N6-acetyllysine; alternate is present on K259. An N6-succinyllysine; alternate modification is found at K259. Substrate-binding positions include Y274 and 281–284 (DLER). The Proton acceptor role is filled by E283. R309 provides a ligand contact to FAD. Position 315 is an N6-succinyllysine (K315). Residues Q320 and 377-381 (QCFGG) contribute to the FAD site. 404-405 (AG) contacts substrate. 406–408 (TSE) lines the FAD pocket.

It belongs to the acyl-CoA dehydrogenase family. Homotetramer. FAD is required as a cofactor.

The protein resides in the mitochondrion matrix. The catalysed reaction is 3-methylbutanoyl-CoA + oxidized [electron-transfer flavoprotein] + H(+) = 3-methylbut-2-enoyl-CoA + reduced [electron-transfer flavoprotein]. It carries out the reaction pentanoyl-CoA + oxidized [electron-transfer flavoprotein] + H(+) = (2E)-pentenoyl-CoA + reduced [electron-transfer flavoprotein]. The enzyme catalyses hexanoyl-CoA + oxidized [electron-transfer flavoprotein] + H(+) = (2E)-hexenoyl-CoA + reduced [electron-transfer flavoprotein]. It catalyses the reaction butanoyl-CoA + oxidized [electron-transfer flavoprotein] + H(+) = (2E)-butenoyl-CoA + reduced [electron-transfer flavoprotein]. It participates in amino-acid degradation; L-leucine degradation; (S)-3-hydroxy-3-methylglutaryl-CoA from 3-isovaleryl-CoA: step 1/3. Catalyzes the conversion of isovaleryl-CoA/3-methylbutanoyl-CoA to 3-methylbut-2-enoyl-CoA as an intermediate step in the leucine (Leu) catabolic pathway. To a lesser extent, is also able to catalyze the oxidation of other saturated short-chain acyl-CoA thioesters as pentanoyl-CoA, hexenoyl-CoA and butenoyl-CoA. This is Isovaleryl-CoA dehydrogenase, mitochondrial (IVD) from Pongo abelii (Sumatran orangutan).